We begin with the raw amino-acid sequence, 64 residues long: Bacteriocin glycocin F (64 aa).

A signal peptide spans 1-21 (MSKLVKTLTISEISKAQNNGG). Cystine bridges form between C26–C49 and C33–C42. An O-linked (GlcNAc) serine glycan is attached at S39. C64 is a glycosylation site (S-linked (GlcNAc) cysteine).

Its subcellular location is the secreted. Its function is as follows. Has antibacterial activity against L.plantarum ATCC 8014. In purified form, the activity is bacteriostatic (IC(50)=2 nM) rather than bactericidal. The polypeptide is Bacteriocin glycocin F (Lactiplantibacillus plantarum (Lactobacillus plantarum)).